We begin with the raw amino-acid sequence, 636 residues long: p-hydroxybenzoate-m-hydroxylase A (636 aa).

FAD is bound by residues 10-39 (DIVI…HIDN), 241-243 (RLY), tyrosine 289, and aspartate 310. The chain crosses the membrane as a helical span at residues 11–28 (IVIVGAGPVGIVLSLCMS).

This sequence belongs to the PheA/TfdB FAD monooxygenase family. The cofactor is FAD.

It is found in the membrane. It carries out the reaction 4-hydroxybenzoate + NADH + O2 + H(+) = 3,4-dihydroxybenzoate + NAD(+) + H2O. The catalysed reaction is 4-hydroxybenzoate + NADPH + O2 + H(+) = 3,4-dihydroxybenzoate + NADP(+) + H2O. FAD-dependent monooxygenase; part of the benzoic acid degradation pathway also known as the protocatechuic acid pathway. Benzoic acid debradation begins with the conversion of benzoic acid into 4-hydroxybenzoic acid through hydroxylation by the benzoate-4-monooxygenase bphA, and its partner NADPH-cytochrome P450 reductase cprA which act as a mediator in electron donation from NADPH. 4-Hydroxybenzoic acid is then converted into 3,4-dihydroxybenzoic acid (also called protocatechuic acid) by the p-hydroxybenzoate-m-hydroxylase phhA. Protocatechuic acid is converted into 3-carboxy-cis,cis-muconic acid by the intradiol ring-cleavage dioxygenase prcA, which is further metabolized through the 3-oxoadipate pathway to finally enter the tricarboxylic acid cycle (TCA). In Aspergillus niger (strain ATCC MYA-4892 / CBS 513.88 / FGSC A1513), this protein is p-hydroxybenzoate-m-hydroxylase A.